Consider the following 1578-residue polypeptide: Formin-2 (1578 aa).

Basic and acidic residues-rich tracts occupy residues 1-17 (MGNQ…DASH), 26-35 (AGPRDAEITK), and 57-66 (TSKKKSKSDS). Positions 1–73 (MGNQDGKLKR…SDSRASVFSN (73 aa)) are disordered. Phosphoserine is present on serine 89. 3 disordered regions span residues 208–230 (KLLL…QPGA), 244–383 (EAEK…PSPR), and 401–458 (RQLS…GLSR). 2 stretches are compositionally biased toward polar residues: residues 273–282 (SSGSHLTSET) and 290–300 (SAVTDSLSSPA). Residues 322–333 (DTDEECEEDAFE) show a composition bias toward acidic residues. Basic and acidic residues predominate over residues 351–364 (ASQRLEKEPEEGMR). Low complexity-rich tracts occupy residues 404-418 (SSPN…NQSP) and 427-442 (SVSR…AAAP). Phosphoserine occurs at positions 459, 489, and 493. The interval 587–634 (SMDYSEGQFPRREPSMWPSSKLPEEEPSPKDVDTEPKSSILESPKKCS) is disordered. Basic and acidic residues predominate over residues 608 to 622 (LPEEEPSPKDVDTEP). A coiled-coil region spans residues 643–683 (DVKSEGQATVIQQLEQTIEDLRTKIAELEKQYPALDLEGPR). 3 disordered regions span residues 714–765 (RTLE…SGPQ), 786–836 (DAQQ…GNNC), and 880–944 (PALQ…MGIS). Residues 735–1124 (PPPKAPPEGL…GCGFLFPPLP (390 aa)) form the FH1 domain. Positions 786-795 (DAQQIQSASQ) are enriched in polar residues. Residues 803–817 (LGSDSQGQPSQPSLH) show a composition bias toward low complexity. Basic and acidic residues predominate over residues 818-827 (TESETSHEHS). Pro residues predominate over residues 893–944 (LPAPPQPPPLPGLGVPPPPPAPPLPGMGIPPPPPLPGMGIPPPPPLPGMGIS). 12 repeat units span residues 919–929 (MGIPPPPPLPG), 930–940 (MGIPPPPPLPG), 941–951 (MGISPLPPLPG), 952–962 (MGIPPPPPLPG), 963–973 (VGIPPPPPLPG), 974–984 (VGIPPPPPLPG), 985–995 (VGIPPPPPLPG), 996–1006 (VGIPPPPPLPG), 1007–1017 (VGIPPPPPLPG), 1018–1028 (VGIPPPPPLPG), 1029–1039 (VGIPPPPPLPG), and 1040–1050 (VGIPPPPPLPG). The interval 919–1039 (MGIPPPPPLP…GIPPPPPLPG (121 aa)) is 12 X 11 AA tandem repeats of [MV]-G-I-P-P-P-P-P-L-P-G. Residues 1037-1097 (LPGVGIPPPP…PPPPLLPGSG (61 aa)) are compositionally biased toward pro residues. The interval 1037–1108 (LPGVGIPPPP…PHSSQVGSST (72 aa)) is disordered. Positions 1139 to 1554 (RKQLIEPCRP…KEAEEVCRQK (416 aa)) constitute an FH2 domain. Residues 1419-1455 (QELFQASQMKFEDFQKDLRKLKKDLKACEAEAGKVYQ) are a coiled coil. The segment at 1571-1578 (KAKISMKT) is important for interaction with SPIRE1.

Belongs to the formin homology family. Cappuccino subfamily. As to quaternary structure, interacts with SPIRE1. Binds actin. Interacts with CDKN1A. As to expression, detected in brain and in oocytes (at protein level). Expressed almost exclusively in the developing and mature central nervous system. Detected in oocytes.

Its subcellular location is the cytoplasm. It localises to the cytoskeleton. It is found in the cytosol. The protein localises to the perinuclear region. The protein resides in the nucleus. Its subcellular location is the nucleolus. It localises to the cell membrane. It is found in the cell cortex. The protein localises to the cytoplasmic vesicle membrane. Actin-binding protein that is involved in actin cytoskeleton assembly and reorganization. Acts as an actin nucleation factor and promotes assembly of actin filaments together with SPIRE1 and SPIRE2. Involved in intracellular vesicle transport along actin fibers, providing a novel link between actin cytoskeleton dynamics and intracellular transport. Required for asymmetric spindle positioning, asymmetric oocyte division and polar body extrusion during female germ cell meiosis. Plays a role in responses to DNA damage, cellular stress and hypoxia by protecting CDKN1A against degradation, and thereby plays a role in stress-induced cell cycle arrest. Also acts in the nucleus: together with SPIRE1 and SPIRE2, promotes assembly of nuclear actin filaments in response to DNA damage in order to facilitate movement of chromatin and repair factors after DNA damage. Protects cells against apoptosis by protecting CDKN1A against degradation. This Mus musculus (Mouse) protein is Formin-2 (Fmn2).